A 952-amino-acid chain; its full sequence is Inactive atromentin synthetase invA6 (952 aa).

The tract at residues 58–462 is adenylation (A) domain; that stretch reads DSSVQTRSFS…NGRIKDTVIV (405 aa). The Carrier domain maps to 594–672; the sequence is APSTETEKTL…SLAKYVDSLV (79 aa). The interval 599 to 669 is thiolation and peptide carrier (T) domain; that stretch reads TEKTLGRLYA…VISSLAKYVD (71 aa). The residue at position 631 (Ser-631) is an O-(pantetheine 4'-phosphoryl)serine. The interval 695–939 is thioesterase (TE) domain; that stretch reads PIFMVHPGIG…LMDFDHVSGF (245 aa).

Belongs to the ATP-dependent AMP-binding enzyme family.

Inactive atromentin synthetase homolog. Does not accept 4-hydroxyphenylpyruvate (4-HPP) as substrate. Both the adenylation (A) and the thioesterase (TE) domain of the invA6 enzyme are inactive. The chain is Inactive atromentin synthetase invA6 (invA6) from Paxillus involutus (Naked brimcap).